Consider the following 378-residue polypeptide: Alpha-(1,3)-fucosyltransferase fut-5 (378 aa).

Over 1–7 the chain is Cytoplasmic; it reads MKHNTLR. A helical; Signal-anchor for type II membrane protein transmembrane segment spans residues 8–28; sequence AVFQFSFFIGICTFIMIAGYS. The Lumenal portion of the chain corresponds to 29–378; the sequence is YQINYNQRMG…CDNSFATRFL (350 aa). Asparagine 44, asparagine 88, asparagine 105, asparagine 143, asparagine 171, and asparagine 307 each carry an N-linked (GlcNAc...) asparagine glycan.

The protein belongs to the glycosyltransferase 10 family. The cofactor is Ca(2+). Post-translationally, N-glycosylated.

Its subcellular location is the golgi apparatus. It localises to the golgi stack membrane. It catalyses the reaction a beta-D-galactosyl-(1-&gt;3)-N-acetyl-beta-D-glucosaminyl derivative + GDP-beta-L-fucose = a beta-D-galactosyl-(1-&gt;3)-[alpha-L-fucosyl-(1-&gt;4)]-N-acetyl-beta-D-glucosaminyl derivative + GDP + H(+). It functions in the pathway protein modification; protein glycosylation. Inhibited by Cu(2+) and Ni(2+), and to a lesser extent by EDTA, Mn(2+) and Mg(2+). Functionally, catalyzes the addition of fucose in alpha 1-3 linkage to GalNAc-beta-1-&gt;4-GlcNAc-beta-1-&gt;3-Gal-beta-1-&gt;4-Glc (LDNT)acceptor. Unlike fut-1, does not add fucose to Man-alpha-1-&gt;3-(Man-alpha-1-&gt;6)-Man-beta-1-&gt;4-GlcNAc-beta-1-&gt;4-GlcNAc-beta-1-Asn (M3), Man-alpha-1-&gt;3-(Man-alpha-1-&gt;6)-Man-beta-1-&gt;4-GlcNAc-beta-1-&gt;4-(Fuc-alpha-1-&gt;6)-GlcNAc-beta-1-Asn (M3F6) or GlcNAc-beta-1-&gt;2-Man-alpha-1-&gt;3-(GlcNAc-beta-1-&gt;2-Man-alpha-1-&gt;6)-Man-beta-1-4-GlcNAc-beta-1-&gt;4-(Fuc-alpha-1-&gt;6)-GlcNAc-beta-1-Asn (GnM3F6) acceptors. In Caenorhabditis elegans, this protein is Alpha-(1,3)-fucosyltransferase fut-5.